The chain runs to 505 residues: ATP synthase subunit alpha, chloroplastic (505 aa).

Position 170–177 (170–177 (GDRQTGKT)) interacts with ATP.

Belongs to the ATPase alpha/beta chains family. F-type ATPases have 2 components, CF(1) - the catalytic core - and CF(0) - the membrane proton channel. CF(1) has five subunits: alpha(3), beta(3), gamma(1), delta(1), epsilon(1). CF(0) has four main subunits: a, b, b' and c.

Its subcellular location is the plastid. It is found in the chloroplast thylakoid membrane. It catalyses the reaction ATP + H2O + 4 H(+)(in) = ADP + phosphate + 5 H(+)(out). In terms of biological role, produces ATP from ADP in the presence of a proton gradient across the membrane. The alpha chain is a regulatory subunit. The protein is ATP synthase subunit alpha, chloroplastic of Oenothera biennis (German evening primrose).